The chain runs to 126 residues: Prefoldin subunit beta (126 aa).

This sequence belongs to the prefoldin subunit beta family. As to quaternary structure, heterohexamer of two alpha and four beta subunits.

It localises to the cytoplasm. Its function is as follows. Molecular chaperone capable of stabilizing a range of proteins. Seems to fulfill an ATP-independent, HSP70-like function in archaeal de novo protein folding. The sequence is that of Prefoldin subunit beta from Saccharolobus islandicus (strain Y.N.15.51 / Yellowstone #2) (Sulfolobus islandicus).